The following is a 42-amino-acid chain: Potassium channel toxin gamma-KTx 1.3 (42 aa).

4 disulfide bridges follow: Cys5/Cys23, Cys11/Cys34, Cys20/Cys39, and Cys24/Cys41.

It belongs to the ergtoxin family. Gamma-KTx 1 subfamily. Expressed by the venom gland.

The protein resides in the secreted. Blocks Kv11/ERG potassium channels. The sequence is that of Potassium channel toxin gamma-KTx 1.3 from Centruroides gracilis (Slenderbrown scorpion).